The primary structure comprises 225 residues: GrpE protein homolog 2, mitochondrial (225 aa).

Residues 1 to 32 constitute a mitochondrion transit peptide; the sequence is MAVRSLWAGRLRVQRLLAWSAAWESKGWPLPF. N6-acetyllysine is present on Lys-142.

The protein belongs to the GrpE family. In terms of assembly, probable component of the PAM complex at least composed of a mitochondrial HSP70 protein, GRPEL1 or GRPEL2, TIMM44, TIMM16/PAM16 and TIMM14/DNAJC19.

It is found in the mitochondrion matrix. Functionally, essential component of the PAM complex, a complex required for the translocation of transit peptide-containing proteins from the inner membrane into the mitochondrial matrix in an ATP-dependent manner. Seems to control the nucleotide-dependent binding of mitochondrial HSP70 to substrate proteins. Stimulates ATPase activity of mt-HSP70. May also serve to modulate the interconversion of oligomeric (inactive) and monomeric (active) forms of mt-HSP70. The protein is GrpE protein homolog 2, mitochondrial (GRPEL2) of Homo sapiens (Human).